The primary structure comprises 338 residues: Acyl-CoA Delta(11) desaturase (338 aa).

Transmembrane regions (helical) follow at residues 33–53 (IVYF…YGLY) and 61–81 (WATV…VTAG). The Histidine box-1 motif lies at 83–88 (HRLWSH). Residues 97 to 117 (LQILLMVMNSLAFQNTVIDWV) form a helical membrane-spanning segment. Residues 120–124 (HRLHH) carry the Histidine box-2 motif. 2 helical membrane-spanning segments follow: residues 181-201 (AIPF…VYGW) and 212-234 (AMLR…HIYG). The short motif at 260-264 (HNYHH) is the Histidine box-3 element. Residues 318–338 (TNLWGLEDVDTPEDLKNTKGE) are disordered.

It belongs to the fatty acid desaturase type 1 family. Fe cation serves as cofactor. As to expression, detected in the pheromone gland.

It localises to the membrane. The catalysed reaction is an 11,12-saturated fatty acyl-CoA + 2 Fe(II)-[cytochrome b5] + O2 + 2 H(+) = an (11Z)-Delta(11)-fatty acyl-CoA + 2 Fe(III)-[cytochrome b5] + 2 H2O. In terms of biological role, catalyzes the formation of delta(11) fatty acyl precursors in the pheromone gland, and has high activity towards palmitic acid and stearic acid. The sequence is that of Acyl-CoA Delta(11) desaturase from Spodoptera littoralis (Egyptian cotton leafworm).